A 391-amino-acid chain; its full sequence is Na(+)/H(+) antiporter NhaA (391 aa).

Transmembrane regions (helical) follow at residues 14-34 (GGIILIIAAAAAMVFANLGAT), 59-79 (MLLWINDALMAVFFLLVGLEV), 95-115 (AFPVIAAIGGMVVPALLYLAF), 125-145 (GWAIPAATDIAFALGVLALLG), 154-174 (IFLMALAIIDDLGAIVIIALF), 180-200 (SILSLSVAAGAIAALALLNIF), 219-239 (VLKSGVHATLAGVIIGFFIPL), 254-274 (VLHPWVAFMILPLFAFANAGV), 292-312 (IIAGLFIGKPLGISLFCWLAL), 328-348 (IMAVGVLCGIGFTMSIFISTL), and 357-377 (LIVWAKLGILTGSLLAAFVGY).

This sequence belongs to the NhaA Na(+)/H(+) (TC 2.A.33) antiporter family.

It localises to the cell inner membrane. It carries out the reaction Na(+)(in) + 2 H(+)(out) = Na(+)(out) + 2 H(+)(in). Na(+)/H(+) antiporter that extrudes sodium in exchange for external protons. The sequence is that of Na(+)/H(+) antiporter NhaA from Enterobacter sp. (strain 638).